A 679-amino-acid chain; its full sequence is DNA ligase (679 aa).

Residues 36–40 (DAQYD), 85–86 (SL), and Glu116 each bind NAD(+). The N6-AMP-lysine intermediate role is filled by Lys118. The NAD(+) site is built by Arg139, Glu174, Lys300, and Lys324. Residues Cys418, Cys421, Cys436, and Cys441 each coordinate Zn(2+). Residues 600–679 (EGGGPLNGKV…NEFRELTGRK (80 aa)) enclose the BRCT domain.

This sequence belongs to the NAD-dependent DNA ligase family. LigA subfamily. The cofactor is Mg(2+). Mn(2+) serves as cofactor.

The catalysed reaction is NAD(+) + (deoxyribonucleotide)n-3'-hydroxyl + 5'-phospho-(deoxyribonucleotide)m = (deoxyribonucleotide)n+m + AMP + beta-nicotinamide D-nucleotide.. In terms of biological role, DNA ligase that catalyzes the formation of phosphodiester linkages between 5'-phosphoryl and 3'-hydroxyl groups in double-stranded DNA using NAD as a coenzyme and as the energy source for the reaction. It is essential for DNA replication and repair of damaged DNA. This is DNA ligase from Pelotomaculum thermopropionicum (strain DSM 13744 / JCM 10971 / SI).